Consider the following 142-residue polypeptide: MKTFLAKKETVQPKWYLIDAAGVPLGRLAVKAANIIRGRHKATYTPTVDTGDYVIVINAAKVALTGKKEEQNEYMFFSGFVGGESRRKVSLMRERHPEFIIEHAVKGMLPKNRIAAKMLTKLRVFGGETHTHEANNPVKVTV.

The protein belongs to the universal ribosomal protein uL13 family. As to quaternary structure, part of the 50S ribosomal subunit.

This protein is one of the early assembly proteins of the 50S ribosomal subunit, although it is not seen to bind rRNA by itself. It is important during the early stages of 50S assembly. In Opitutus terrae (strain DSM 11246 / JCM 15787 / PB90-1), this protein is Large ribosomal subunit protein uL13.